Reading from the N-terminus, the 383-residue chain is Lipid-A-disaccharide synthase (383 aa).

Belongs to the LpxB family.

The enzyme catalyses a lipid X + a UDP-2-N,3-O-bis[(3R)-3-hydroxyacyl]-alpha-D-glucosamine = a lipid A disaccharide + UDP + H(+). Its pathway is bacterial outer membrane biogenesis; LPS lipid A biosynthesis. Condensation of UDP-2,3-diacylglucosamine and 2,3-diacylglucosamine-1-phosphate to form lipid A disaccharide, a precursor of lipid A, a phosphorylated glycolipid that anchors the lipopolysaccharide to the outer membrane of the cell. The protein is Lipid-A-disaccharide synthase of Aliivibrio salmonicida (strain LFI1238) (Vibrio salmonicida (strain LFI1238)).